A 109-amino-acid polypeptide reads, in one-letter code: Nucleoid-associated protein SO_2014 (109 aa).

Belongs to the YbaB/EbfC family. Homodimer.

The protein resides in the cytoplasm. It localises to the nucleoid. In terms of biological role, binds to DNA and alters its conformation. May be involved in regulation of gene expression, nucleoid organization and DNA protection. The sequence is that of Nucleoid-associated protein SO_2014 from Shewanella oneidensis (strain ATCC 700550 / JCM 31522 / CIP 106686 / LMG 19005 / NCIMB 14063 / MR-1).